The following is a 72-amino-acid chain: Translation initiation factor IF-1 (72 aa).

The S1-like domain maps to Met1 to Lys72.

The protein belongs to the IF-1 family. In terms of assembly, component of the 30S ribosomal translation pre-initiation complex which assembles on the 30S ribosome in the order IF-2 and IF-3, IF-1 and N-formylmethionyl-tRNA(fMet); mRNA recruitment can occur at any time during PIC assembly.

The protein resides in the cytoplasm. Functionally, one of the essential components for the initiation of protein synthesis. Stabilizes the binding of IF-2 and IF-3 on the 30S subunit to which N-formylmethionyl-tRNA(fMet) subsequently binds. Helps modulate mRNA selection, yielding the 30S pre-initiation complex (PIC). Upon addition of the 50S ribosomal subunit IF-1, IF-2 and IF-3 are released leaving the mature 70S translation initiation complex. In Ruegeria sp. (strain TM1040) (Silicibacter sp.), this protein is Translation initiation factor IF-1.